A 128-amino-acid polypeptide reads, in one-letter code: Adrenodoxin homolog (128 aa).

The region spanning 12–115 is the 2Fe-2S ferredoxin-type domain; that stretch reads EQIRIFFKTM…NAVFTVPRAT (104 aa). 4 residues coordinate [2Fe-2S] cluster: C50, C56, C59, and C96.

This sequence belongs to the adrenodoxin/putidaredoxin family. Requires [2Fe-2S] cluster as cofactor.

It localises to the mitosome. In terms of biological role, ferredoxins are iron-sulfur proteins that transfer electrons in a wide variety of metabolic reactions. This is Adrenodoxin homolog from Encephalitozoon cuniculi (strain GB-M1) (Microsporidian parasite).